Reading from the N-terminus, the 127-residue chain is MFRTMMKAKLHRARVTESNLNYVGSITIDEDIMDAVDIVENEKVQIVNNNNGARFETYVIKGPRGSGVFCLNGAAARLVQEGDVIIVISYALVAEENVKEHQPKVAVLNESNQIVEMLGTEPASTVL.

The active-site Schiff-base intermediate with substrate; via pyruvic acid is S25. A Pyruvic acid (Ser) modification is found at S25. Residue T57 coordinates substrate. Y58 acts as the Proton donor in catalysis. 73–75 is a substrate binding site; the sequence is GAA.

This sequence belongs to the PanD family. Heterooctamer of four alpha and four beta subunits. Requires pyruvate as cofactor. In terms of processing, is synthesized initially as an inactive proenzyme, which is activated by self-cleavage at a specific serine bond to produce a beta-subunit with a hydroxyl group at its C-terminus and an alpha-subunit with a pyruvoyl group at its N-terminus.

It localises to the cytoplasm. The enzyme catalyses L-aspartate + H(+) = beta-alanine + CO2. It participates in cofactor biosynthesis; (R)-pantothenate biosynthesis; beta-alanine from L-aspartate: step 1/1. Its function is as follows. Catalyzes the pyruvoyl-dependent decarboxylation of aspartate to produce beta-alanine. The protein is Aspartate 1-decarboxylase of Halalkalibacterium halodurans (strain ATCC BAA-125 / DSM 18197 / FERM 7344 / JCM 9153 / C-125) (Bacillus halodurans).